The following is a 962-amino-acid chain: Putative primase C962R (962 aa).

Residues 607 to 775 (ELDARLWIMF…PDPNNSYEKK (169 aa)) enclose the SF3 helicase domain. 636 to 643 (GGGCNGKT) is a binding site for ATP.

It belongs to the asfivirus helicase C962R family.

The sequence is that of Putative primase C962R from African swine fever virus (isolate Warthog/Namibia/Wart80/1980) (ASFV).